The following is a 343-amino-acid chain: Multidrug resistance protein MdtN (343 aa).

Topologically, residues 1 to 12 (MESTPKKAPRSK) are cytoplasmic. The chain crosses the membrane as a helical; Signal-anchor for type II membrane protein span at residues 13 to 33 (FPALLVVALALVALVFVIWRV). Over 34-343 (DSAPSTNDAY…ASAVANLEPQ (310 aa)) the chain is Periplasmic.

It belongs to the membrane fusion protein (MFP) (TC 8.A.1) family. In terms of assembly, could be part of a tripartite efflux system composed of MdtN, MdtO and MdtP.

The protein localises to the cell inner membrane. Functionally, could be involved in resistance to puromycin, acriflavine and tetraphenylarsonium chloride. The chain is Multidrug resistance protein MdtN (mdtN) from Escherichia coli (strain K12).